Reading from the N-terminus, the 1112-residue chain is MPDFRYADALPEVRMSNALTTPNYLLPDLVEIQRESFRWFLEEGLIEELLSFSPITDYTGKMELHFLQDYKLKEPKYSVEEAKRRDSTYSVQMYVSTRLVNKETGEIKEQQVFIGELPLMTDRGTFIINGAERVIVNQIVRSPGVYYKQELDTNGRKTFNASLIPNRGAWLKFETDANDLVWVRIDKTRKLSAVVLLKALGLSDNEILDAFRHPEYFQKTIEKEGNYSEEEALLELYRKLRPGEPPTVSGGQQLLETRFFDPKRYDLGRVGRYKLNKKLRLSVPETTRILTPQDILASIDYLINLEFDIGSPDDIDHLGNRRVRSVGELLQNQVRVGLNRLERIIRERMTVSEAETLTPASLVNPKPLVAAIKEFFGSSQLSQFMDQTNPLAELTHKRRLSALGPGGLTRERAGFAVRDIHPSHYGRICPIETPEGPNAGLIGSLATHARVNSYGFIETPYKVVKDGRLSGEIKYLTADEEDEFRVAAGDVAVDEGGNILANPVTIRYRQEFGLASPAEVDYVAVSPIQIVSVATSLIPFLEHDDANRALMGANMQRQAVPLLRPERPLVGTGLEGQAARDSGMVIVSDIDGAITYVSGEQIRVRGENGQEFAYPLQKYQRSNQDTCLSQRPIVNVGDQVRNGQILADGSATEGGELALGQNILVAFMPWEGYNYEDAILISERLVYDDVFTSIHVEKFEIEARQTKLGPEEITREIPNVGEDSLRNLDERGIVRIGAWMEAGDILVGKVTPKGESDQPPEEKLLRAIFGEKARDVRDNSLRVPNGEKGRVVDVRVFTREQGDELPPGANMVVRVYLAQKRKVQVGDKVAGRHGNKGIISKILPKEDMPYLPDGRPVDIVLNPLGVPSRMNVGQVFETLLGWAGACLNVRFKVTPFDEMYIKEASRYLVHEKLMEAREVTGDPWVYSDTGKHIGKIQVYDGRTGEAFDRPVTVGQIYMMKLVHLVDDKIHARSTGPYSLVTQQPLGGKAQQGGQRFGEMEVWALEAFGAAYTLQELLTVKSDDMTGRNEALNAIVKGKAIPRPGIPESFKVLVRELQSLGLDVSVHKIETQHDGSSRDVEVDLMADVGGRRTPNRPTYENIGGPREMEFSED.

The disordered stretch occupies residues 1087-1112 (VGGRRTPNRPTYENIGGPREMEFSED).

This sequence belongs to the RNA polymerase beta chain family. In cyanobacteria the RNAP catalytic core is composed of 2 alpha, 1 beta, 1 beta', 1 gamma and 1 omega subunit. When a sigma factor is associated with the core the holoenzyme is formed, which can initiate transcription.

The catalysed reaction is RNA(n) + a ribonucleoside 5'-triphosphate = RNA(n+1) + diphosphate. DNA-dependent RNA polymerase catalyzes the transcription of DNA into RNA using the four ribonucleoside triphosphates as substrates. The chain is DNA-directed RNA polymerase subunit beta from Gloeobacter violaceus (strain ATCC 29082 / PCC 7421).